We begin with the raw amino-acid sequence, 177 residues long: Large ribosomal subunit protein uL22 (177 aa).

A disordered region spans residues Val118 to Gln177. The segment covering Arg121 to Gly130 has biased composition (basic and acidic residues). Residues Gly145–Glu167 show a composition bias toward low complexity.

This sequence belongs to the universal ribosomal protein uL22 family. As to quaternary structure, part of the 50S ribosomal subunit.

Functionally, this protein binds specifically to 23S rRNA; its binding is stimulated by other ribosomal proteins, e.g. L4, L17, and L20. It is important during the early stages of 50S assembly. It makes multiple contacts with different domains of the 23S rRNA in the assembled 50S subunit and ribosome. Its function is as follows. The globular domain of the protein is located near the polypeptide exit tunnel on the outside of the subunit, while an extended beta-hairpin is found that lines the wall of the exit tunnel in the center of the 70S ribosome. This chain is Large ribosomal subunit protein uL22, found in Mycobacterium sp. (strain JLS).